The following is a 189-amino-acid chain: Protein Rex (189 aa).

Residues 1–16 (MPKTRRRPRRSQRKRP) show a composition bias toward basic residues. The segment at 1 to 28 (MPKTRRRPRRSQRKRPPTPWPTSQGLDR) is disordered. The Nuclear localization signal, and RNA-binding (RxRE) motif lies at 2–18 (PKTRRRPRRSQRKRPPT). The segment at 56–70 (RPVYIVTPYWPPVQS) is homomultimerization. A Phosphoserine; by host modification is found at S70. The short motif at 82 to 93 (LSAQLYSSLSLD) is the Nuclear export signal element. Positions 84 to 94 (AQLYSSLSLDS) are enriched in low complexity. The disordered stretch occupies residues 84 to 189 (AQLYSSLSLD…PPSPGPSCPT (106 aa)). The segment covering 111–125 (RRPPIQPPTFHPPSS) has biased composition (pro residues). A homomultimerization region spans residues 123–131 (PSSRPCANT). Polar residues predominate over residues 127-164 (PCANTPPSETDTWNPPLGSTSQPCLFQTPASGPKTCTP). Phosphothreonine; by host is present on T174. S177 bears the Phosphoserine; by host mark. Residues 178 to 189 (FPPPSPGPSCPT) are compositionally biased toward pro residues.

Belongs to the deltaretrovirus Rex protein family. Homomultimer. Multimeric assembly is essential for activity and involves XPO1. Binds to human XPO1 and KPNB1. Interacts (via N-terminal nuclear localization signal) with human NPM1. Post-translationally, phosphorylated.

The protein resides in the host nucleus. Its subcellular location is the host nucleolus. The protein localises to the host cytoplasm. Rex escorts unspliced gag-pro-pol and singly spliced env mRNAs out of the nucleus of infected cells. These mRNAs carry a recognition sequence called Rex responsive element (RxRE or XRE) located at the 3' region of the long terminal repeat (LTR). This function is essential since most HTLV proteins are translated from unspliced or partially spliced pre-mRNAs that cannot exit the nucleus by the pathway used by fully processed cellular mRNAs. Rex itself is translated from a fully spliced mRNA that probably readily exits the nucleus. Rex's nuclear localization signal (NLS) binds directly to KPNB1/importin beta-1 without previous binding to KPNA1/importin alpha-1. KPNB1 binds to the GDP bound form of RAN (Ran-GDP) and targets Rex to the nucleus. In the nucleus, the conversion from Ran-GDP to Ran-GTP dissociates Rex from KPNB1 and allows Rex's binding to the RRE in viral pre-mRNAs. Rex multimerizes on the RRE via cooperative assembly. This multimerization is critical for its full biological activity, since it may shield the viral RNA from being spliced or down-regulated, and probably exposes Rex's nuclear export signal (NES) to the surface. Rex can then form a complex with XPO1/CRM1, RANBP3 and Ran-GTP, leading to nuclear export of the complex. Conversion from Ran-GTP to Ran-GDP mediates dissociation of the Rex/RRE/XPO1/RANBP3/RAN complex, so that Rex can return to the nucleus for a subsequent round of export. The polypeptide is Protein Rex (Homo sapiens (Human)).